The chain runs to 207 residues: Putative acetyltransferase C18B11.09c (207 aa).

The protein belongs to the transferase hexapeptide repeat family.

In Schizosaccharomyces pombe (strain 972 / ATCC 24843) (Fission yeast), this protein is Putative acetyltransferase C18B11.09c.